Consider the following 173-residue polypeptide: MPRTQRNDNFIDKSFTVMADIILKMLPANKKAKEAFVYYRDGMSAQADGEYAEALDNYYEALTLEEDPNDRSYILYNIGIIHASNGEHEKALEYYEEAIQLNPRMPSALNNIAVIYHFQGEKAREDGQQAEAEALYDKAAEYWKQAIRLAPNNYIEAQNWLKITGRSEIDVFF.

TPR repeat units lie at residues 35–68 (AFVYYRDGMSAQADGEYAEALDNYYEALTLEEDP), 72–105 (SYILYNIGIIHASNGEHEKALEYYEEAIQLNPRM), and 120–153 (GEKAREDGQQAEAEALYDKAAEYWKQAIRLAPNN).

It belongs to the Ycf3 family.

Its subcellular location is the cellular thylakoid membrane. Essential for the assembly of the photosystem I (PSI) complex. May act as a chaperone-like factor to guide the assembly of the PSI subunits. The protein is Photosystem I assembly protein Ycf3 of Microcystis aeruginosa (strain NIES-843 / IAM M-2473).